Reading from the N-terminus, the 440-residue chain is Glutamate-1-semialdehyde 2,1-aminomutase (440 aa).

Lys-271 is modified (N6-(pyridoxal phosphate)lysine).

This sequence belongs to the class-III pyridoxal-phosphate-dependent aminotransferase family. HemL subfamily. In terms of assembly, homodimer. Pyridoxal 5'-phosphate serves as cofactor.

The protein resides in the cytoplasm. It carries out the reaction (S)-4-amino-5-oxopentanoate = 5-aminolevulinate. The protein operates within porphyrin-containing compound metabolism; protoporphyrin-IX biosynthesis; 5-aminolevulinate from L-glutamyl-tRNA(Glu): step 2/2. The protein is Glutamate-1-semialdehyde 2,1-aminomutase of Chlamydia pneumoniae (Chlamydophila pneumoniae).